Reading from the N-terminus, the 300-residue chain is F-box associated domain-containing protein sdz-33 (300 aa).

Residues 5–51 (PFPILCLPDFVLQKSLKLMGVVEHLCLSILSKNIKQLIATLKGYPKC) form the F-box domain.

In terms of tissue distribution, expressed in D-type motor neuron cell bodies.

In terms of biological role, substrate recognition component of E3 ubiquitin-protein ligase complex which mediates the ubiquitination and subsequent proteasomal degradation of target proteins such as mdl-1. Positively regulates axon regeneration by targeting mdl-1 for ubiquitin-mediated degradation; probably thereby reducing levels of mdl-1-mxl-1 heterodimers, allowing free mxl-1 to form complexes with tdpt-1 and thus inhibiting tdpt-1-dependent sumoylation of ets-4. In Caenorhabditis elegans, this protein is F-box associated domain-containing protein sdz-33.